We begin with the raw amino-acid sequence, 279 residues long: Small ribosomal subunit protein uS3 (279 aa).

One can recognise a KH type-2 domain in the interval 17-86 (VDEYFLEKLE…NPQIDVQEVK (70 aa)). Low complexity-rich tracts occupy residues 206–233 (AEKK…STAA) and 241–252 (ESEAAEAVTPEG). A disordered region spans residues 206-279 (AEKKSPAAGA…VVKTDGDSQS (74 aa)).

Belongs to the universal ribosomal protein uS3 family. In terms of assembly, part of the 30S ribosomal subunit.

Functionally, binds the lower part of the 30S subunit head. This Methanocella arvoryzae (strain DSM 22066 / NBRC 105507 / MRE50) protein is Small ribosomal subunit protein uS3.